A 412-amino-acid chain; its full sequence is Isocitrate dehydrogenase [NADP] (412 aa).

NADP(+) is bound at residue threonine 100. D-threo-isocitrate-binding residues include serine 109, asparagine 111, arginine 115, arginine 125, and arginine 149. Residue aspartate 301 coordinates Mg(2+). NADP(+) is bound by residues 333–339, asparagine 346, tyrosine 385, and arginine 389; that span reads HGSAPKY.

The protein belongs to the isocitrate and isopropylmalate dehydrogenases family. Homodimer. Mg(2+) serves as cofactor. The cofactor is Mn(2+).

It carries out the reaction D-threo-isocitrate + NADP(+) = 2-oxoglutarate + CO2 + NADPH. Catalyzes the oxidative decarboxylation of isocitrate to 2-oxoglutarate and carbon dioxide with the concomitant reduction of NADP(+). NAD(+) can replace NADP(+) with low efficiency. The polypeptide is Isocitrate dehydrogenase [NADP] (Archaeoglobus fulgidus (strain ATCC 49558 / DSM 4304 / JCM 9628 / NBRC 100126 / VC-16)).